The sequence spans 276 residues: 2-dehydro-3-deoxyphosphooctonate aldolase (276 aa).

Belongs to the KdsA family.

It is found in the cytoplasm. It carries out the reaction D-arabinose 5-phosphate + phosphoenolpyruvate + H2O = 3-deoxy-alpha-D-manno-2-octulosonate-8-phosphate + phosphate. Its pathway is carbohydrate biosynthesis; 3-deoxy-D-manno-octulosonate biosynthesis; 3-deoxy-D-manno-octulosonate from D-ribulose 5-phosphate: step 2/3. It functions in the pathway bacterial outer membrane biogenesis; lipopolysaccharide biosynthesis. The sequence is that of 2-dehydro-3-deoxyphosphooctonate aldolase from Helicobacter pylori (strain P12).